The following is a 97-amino-acid chain: YcgL domain-containing protein PA14_47450 (97 aa).

One can recognise a YcgL domain in the interval 3–87; the sequence is RICSVYKSPR…GEEEYIEHLP (85 aa).

The sequence is that of YcgL domain-containing protein PA14_47450 from Pseudomonas aeruginosa (strain UCBPP-PA14).